The sequence spans 215 residues: Thiamine import ATP-binding protein ThiQ (215 aa).

An ABC transporter domain is found at I2 to V215. Residue G32–S39 participates in ATP binding.

This sequence belongs to the ABC transporter superfamily. Thiamine importer (TC 3.A.1.19.1) family. In terms of assembly, the complex is composed of two ATP-binding proteins (ThiQ), two transmembrane proteins (ThiP) and a solute-binding protein (ThiB).

The protein resides in the cell inner membrane. The catalysed reaction is thiamine(out) + ATP + H2O = thiamine(in) + ADP + phosphate + H(+). In terms of biological role, part of the ABC transporter complex ThiBPQ involved in thiamine import. Responsible for energy coupling to the transport system. The sequence is that of Thiamine import ATP-binding protein ThiQ from Haemophilus influenzae (strain 86-028NP).